The primary structure comprises 388 residues: Flavin oxidoreductase hxnT (388 aa).

This sequence belongs to the NADH:flavin oxidoreductase/NADH oxidase family. FMN serves as cofactor.

Its function is as follows. Flavin oxidoreductase, part of the hnx cluster involved in the purine degradation. The nicotinate hydroxylase hnxS accepts nicotinate as a substrate and catalyzes the first step of nicotinate catabolism. The major facilitator-type transporters hxnP and hxnZ are probably involved in the uptake of nicotinate-derived metabolites, and the oxidoreductases hxnT and hxnY in the further metabolism of 6-OH nicotinic acid. The sequence is that of Flavin oxidoreductase hxnT from Emericella nidulans (strain FGSC A4 / ATCC 38163 / CBS 112.46 / NRRL 194 / M139) (Aspergillus nidulans).